A 71-amino-acid chain; its full sequence is UPF0346 protein Bcer98_1690 (71 aa).

This sequence belongs to the UPF0346 family.

This Bacillus cytotoxicus (strain DSM 22905 / CIP 110041 / 391-98 / NVH 391-98) protein is UPF0346 protein Bcer98_1690.